Reading from the N-terminus, the 266-residue chain is Energy-coupling factor transporter transmembrane protein EcfT (266 aa).

Transmembrane regions (helical) follow at residues 32 to 52 (IIVVFLANNIWSYAILIAFTV), 71 to 91 (PLLWLIVFTVVLQLLFSPAGG), 107 to 127 (LINAGYIFVRFLLIIMMSTLL), 152 to 172 (VPVDTLAMMLSIALRFVPTLM), and 246 to 266 (DTVTWLLFLLGFVAILIFRHW).

The protein belongs to the energy-coupling factor EcfT family. In terms of assembly, forms a stable energy-coupling factor (ECF) transporter complex composed of 2 membrane-embedded substrate-binding proteins (S component), 2 ATP-binding proteins (A component) and 2 transmembrane proteins (T component). May be able to interact with more than 1 S component at a time.

The protein resides in the cell membrane. Transmembrane (T) component of an energy-coupling factor (ECF) ABC-transporter complex. Unlike classic ABC transporters this ECF transporter provides the energy necessary to transport a number of different substrates. This chain is Energy-coupling factor transporter transmembrane protein EcfT, found in Levilactobacillus brevis (strain ATCC 367 / BCRC 12310 / CIP 105137 / JCM 1170 / LMG 11437 / NCIMB 947 / NCTC 947) (Lactobacillus brevis).